The following is a 451-amino-acid chain: Deoxyguanosinetriphosphate triphosphohydrolase-like protein (451 aa).

Residues 61-274 (RLTHSLEVAQ…MELADDIAYG (214 aa)) enclose the HD domain.

The protein belongs to the dGTPase family. Type 2 subfamily.

The sequence is that of Deoxyguanosinetriphosphate triphosphohydrolase-like protein from Actinobacillus succinogenes (strain ATCC 55618 / DSM 22257 / CCUG 43843 / 130Z).